The chain runs to 68 residues: Negative regulatory protein YxlD (68 aa).

2 helical membrane-spanning segments follow: residues 5–25 (EIIITVAACLIVLAQGIFLFI) and 37–57 (WGIVGLIQAPMPLICYYFFVI).

It localises to the cell membrane. Together with YxlE, is important for negative regulation of sigma Y activity, being the major negative regulator. This Bacillus subtilis (strain 168) protein is Negative regulatory protein YxlD (yxlD).